A 616-amino-acid polypeptide reads, in one-letter code: Proline--tRNA ligase (616 aa).

This sequence belongs to the class-II aminoacyl-tRNA synthetase family. ProS type 1 subfamily. Homodimer.

The protein localises to the cytoplasm. It catalyses the reaction tRNA(Pro) + L-proline + ATP = L-prolyl-tRNA(Pro) + AMP + diphosphate. In terms of biological role, catalyzes the attachment of proline to tRNA(Pro) in a two-step reaction: proline is first activated by ATP to form Pro-AMP and then transferred to the acceptor end of tRNA(Pro). As ProRS can inadvertently accommodate and process non-cognate amino acids such as alanine and cysteine, to avoid such errors it has two additional distinct editing activities against alanine. One activity is designated as 'pretransfer' editing and involves the tRNA(Pro)-independent hydrolysis of activated Ala-AMP. The other activity is designated 'posttransfer' editing and involves deacylation of mischarged Ala-tRNA(Pro). The misacylated Cys-tRNA(Pro) is not edited by ProRS. The sequence is that of Proline--tRNA ligase from Streptococcus sanguinis (strain SK36).